Here is a 131-residue protein sequence, read N- to C-terminus: Sec-independent protein translocase protein TatB (131 aa).

Residues 1-21 (MFDISFAELVVVGIVALIVIG) form a helical membrane-spanning segment. 2 stretches are compositionally biased toward polar residues: residues 71–93 (NSFE…TQSA) and 111–131 (PVNT…QPNS). The segment at 71-131 (NSFENSVRSE…APAEPRQPNS (61 aa)) is disordered.

Belongs to the TatB family. The Tat system comprises two distinct complexes: a TatABC complex, containing multiple copies of TatA, TatB and TatC subunits, and a separate TatA complex, containing only TatA subunits. Substrates initially bind to the TatABC complex, which probably triggers association of the separate TatA complex to form the active translocon.

It is found in the cell inner membrane. In terms of biological role, part of the twin-arginine translocation (Tat) system that transports large folded proteins containing a characteristic twin-arginine motif in their signal peptide across membranes. Together with TatC, TatB is part of a receptor directly interacting with Tat signal peptides. TatB may form an oligomeric binding site that transiently accommodates folded Tat precursor proteins before their translocation. In Nitrosomonas europaea (strain ATCC 19718 / CIP 103999 / KCTC 2705 / NBRC 14298), this protein is Sec-independent protein translocase protein TatB.